Consider the following 179-residue polypeptide: UPF0302 protein BPUM_1989 (179 aa).

Belongs to the UPF0302 family.

This chain is UPF0302 protein BPUM_1989, found in Bacillus pumilus (strain SAFR-032).